Consider the following 357-residue polypeptide: Heat-inducible transcription repressor HrcA (357 aa).

Belongs to the HrcA family.

In terms of biological role, negative regulator of class I heat shock genes (grpE-dnaK-dnaJ and groELS operons). Prevents heat-shock induction of these operons. The protein is Heat-inducible transcription repressor HrcA of Ureaplasma parvum serovar 3 (strain ATCC 27815 / 27 / NCTC 11736).